Here is a 510-residue protein sequence, read N- to C-terminus: NAD(P)H-quinone oxidoreductase subunit 2, chloroplastic (510 aa).

11 helical membrane-spanning segments follow: residues 24-44 (LLLFHGSFIFPECILIFGLIL), 59-79 (WFYFISSTSLVMSITALLFRW), 99-119 (IFQFLILLCSTLCIPLSVEYI), 124-144 (MAITEFLLFVLTATLGGMFLC), 149-169 (LITIFVAPECFSLCSYLLSGY), 183-203 (YLLMGGASSSILVHGFSWLYG), 295-315 (WHLLLEILAILSMILGNLIAI), 323-343 (MLAYSSIGQIGYVIIGIIVGD), 347-367 (GYASMITYMLFYISMNLGTFA), 395-415 (ALSSALCLLSLGGLPPLAGFF), and 418-438 (LHLFWCGWQAGLYFLVSIGLL).

Belongs to the complex I subunit 2 family. As to quaternary structure, NDH is composed of at least 16 different subunits, 5 of which are encoded in the nucleus.

The protein resides in the plastid. It is found in the chloroplast thylakoid membrane. The catalysed reaction is a plastoquinone + NADH + (n+1) H(+)(in) = a plastoquinol + NAD(+) + n H(+)(out). It carries out the reaction a plastoquinone + NADPH + (n+1) H(+)(in) = a plastoquinol + NADP(+) + n H(+)(out). In terms of biological role, NDH shuttles electrons from NAD(P)H:plastoquinone, via FMN and iron-sulfur (Fe-S) centers, to quinones in the photosynthetic chain and possibly in a chloroplast respiratory chain. The immediate electron acceptor for the enzyme in this species is believed to be plastoquinone. Couples the redox reaction to proton translocation, and thus conserves the redox energy in a proton gradient. This Maianthemum racemosum (False Solomon's-seal) protein is NAD(P)H-quinone oxidoreductase subunit 2, chloroplastic.